A 313-amino-acid chain; its full sequence is Ribosomal RNA small subunit methyltransferase H (313 aa).

S-adenosyl-L-methionine-binding positions include 35-37, Asp-55, Phe-79, Asp-100, and Gln-107; that span reads GGH.

Belongs to the methyltransferase superfamily. RsmH family.

The protein localises to the cytoplasm. The catalysed reaction is cytidine(1402) in 16S rRNA + S-adenosyl-L-methionine = N(4)-methylcytidine(1402) in 16S rRNA + S-adenosyl-L-homocysteine + H(+). In terms of biological role, specifically methylates the N4 position of cytidine in position 1402 (C1402) of 16S rRNA. This chain is Ribosomal RNA small subunit methyltransferase H, found in Burkholderia thailandensis (strain ATCC 700388 / DSM 13276 / CCUG 48851 / CIP 106301 / E264).